We begin with the raw amino-acid sequence, 486 residues long: Glucose-6-phosphate 1-dehydrogenase (486 aa).

Residues 13-20 (GGTGDLAK), Arg47, 86-87 (DV), and Lys149 each bind NADP(+). Substrate contacts are provided by His179, Lys183, Glu217, and Asp236. Residue His241 is the Proton acceptor of the active site. Positions 339 and 344 each coordinate substrate.

This sequence belongs to the glucose-6-phosphate dehydrogenase family. In terms of assembly, homodimer.

It catalyses the reaction D-glucose 6-phosphate + NAD(+) = 6-phospho-D-glucono-1,5-lactone + NADH + H(+). It carries out the reaction D-glucose 6-phosphate + NADP(+) = 6-phospho-D-glucono-1,5-lactone + NADPH + H(+). The protein operates within carbohydrate degradation; pentose phosphate pathway; D-ribulose 5-phosphate from D-glucose 6-phosphate (oxidative stage): step 1/3. Catalyzes the oxidation of glucose 6-phosphate to 6-phosphogluconolactone. Can utilize either NADP(+) or NAD(+). In Leuconostoc mesenteroides, this protein is Glucose-6-phosphate 1-dehydrogenase.